Here is a 101-residue protein sequence, read N- to C-terminus: Signal recognition particle 19 kDa protein (101 aa).

The protein belongs to the SRP19 family. Part of the signal recognition particle protein translocation system, which is composed of SRP and FtsY. Archaeal SRP consists of a 7S RNA molecule of 300 nucleotides and two protein subunits: SRP54 and SRP19.

The protein resides in the cytoplasm. Its function is as follows. Involved in targeting and insertion of nascent membrane proteins into the cytoplasmic membrane. Binds directly to 7S RNA and mediates binding of the 54 kDa subunit of the SRP. The polypeptide is Signal recognition particle 19 kDa protein (Thermofilum pendens (strain DSM 2475 / Hrk 5)).